We begin with the raw amino-acid sequence, 282 residues long: Pantothenate synthetase (282 aa).

Position 26 to 33 (26 to 33 (MGNLHEGH)) interacts with ATP. His33 serves as the catalytic Proton donor. Residue Gln57 coordinates (R)-pantoate. Gln57 provides a ligand contact to beta-alanine. ATP is bound at residue 144–147 (GKKD). Gln150 provides a ligand contact to (R)-pantoate. Residues Val173 and 181 to 184 (LSSR) each bind ATP.

Belongs to the pantothenate synthetase family. In terms of assembly, homodimer.

The protein localises to the cytoplasm. It carries out the reaction (R)-pantoate + beta-alanine + ATP = (R)-pantothenate + AMP + diphosphate + H(+). Its pathway is cofactor biosynthesis; (R)-pantothenate biosynthesis; (R)-pantothenate from (R)-pantoate and beta-alanine: step 1/1. Its function is as follows. Catalyzes the condensation of pantoate with beta-alanine in an ATP-dependent reaction via a pantoyl-adenylate intermediate. The polypeptide is Pantothenate synthetase (Cupriavidus taiwanensis (strain DSM 17343 / BCRC 17206 / CCUG 44338 / CIP 107171 / LMG 19424 / R1) (Ralstonia taiwanensis (strain LMG 19424))).